An 808-amino-acid chain; its full sequence is Potassium transporter 5 (808 aa).

Over 1–65 (MAEEVGETRG…NQVNWKKTLS (65 aa)) the chain is Cytoplasmic. A helical membrane pass occupies residues 66–86 (LTFQSIGVVYGDIGTSPLYVY). At 87–102 (ESTFPDKIGSKEDILG) the chain is on the extracellular side. A helical transmembrane segment spans residues 103 to 123 (VLSLIIYTLVLLPMLKYVFIV). The Cytoplasmic segment spans residues 124–189 (LRANDNGDGG…EKMENSKNIK (66 aa)). Residues 190-210 (ILLFLVTILGTSMVIGDGVLT) traverse the membrane as a helical segment. Residues 211 to 221 (PCISVLSAVSG) are Extracellular-facing. The helical transmembrane segment at 222 to 242 (IGSLGQDAVVGISIAILIVLF) threads the bilayer. Topologically, residues 243-251 (CAQRLGTDK) are cytoplasmic. The chain crosses the membrane as a helical span at residues 252–272 (VGFSFAPIILLWFSFIGGIGL). Topologically, residues 273–302 (YNLFKYDVSVLRAFNPKYMFDYFKRNGKQG) are extracellular. The helical transmembrane segment at 303 to 323 (WISLGGVVLAVTGTEAMFADL) threads the bilayer. Over 324 to 327 (GHFN) the chain is Cytoplasmic. The chain crosses the membrane as a helical span at residues 328-348 (VQAIQISFSGIVFPALLCAYA). The Extracellular segment spans residues 349 to 379 (GQAAYLTKFPDDVSKTFYKSIPDPLYWPTFV). A helical transmembrane segment spans residues 380-400 (VAVAAAIIASQAMISGAFAII). Residues 401–424 (SQSLSLGCFPRVKVIHTSAKYEGQ) are Cytoplasmic-facing. The chain crosses the membrane as a helical span at residues 425–445 (VYIPEVNYILMIACIMVCLGF). Over 446-456 (KTTEKIGNAYG) the chain is Extracellular. A helical transmembrane segment spans residues 457 to 477 (IAVVAVMVITTCMVTIIMLVV). Residues 478-482 (WRTKM) lie on the Cytoplasmic side of the membrane. A helical membrane pass occupies residues 483–503 (IWIAFFFFGFICIEAVYLSSV). Over 504–510 (LYKFKDG) the chain is Extracellular. Residues 511 to 531 (GFLPLAFSFFLMIIMGIWHYI) traverse the membrane as a helical segment. Residues 532-808 (HKERYMYELK…LLRVGMTYEI (277 aa)) lie on the Cytoplasmic side of the membrane. Positions 699 to 722 (LQQPNPSRVSSGSIHSNSGIKSTK) are disordered.

The protein belongs to the HAK/KUP transporter (TC 2.A.72.3) family. Expressed in the roots.

It localises to the cell membrane. It catalyses the reaction K(+)(in) = K(+)(out). Functionally, high-affinity potassium transporter that functions under low potassium conditions. Involved in the positive regulation of salt tolerance under salt stress. This is Potassium transporter 5 from Manihot esculenta (Cassava).